Consider the following 263-residue polypeptide: Polyamine aminopropyltransferase (263 aa).

The 221-residue stretch at 1–221 (MARHPYRRLR…AVMAFQSSPK (221 aa)) folds into the PABS domain. Residues Asp-98 and 126–127 (DG) each bind S-methyl-5'-thioadenosine. Catalysis depends on Asp-144, which acts as the Proton acceptor.

This sequence belongs to the spermidine/spermine synthase family. Homodimer or homotetramer.

The protein resides in the cytoplasm. It carries out the reaction S-adenosyl 3-(methylsulfanyl)propylamine + putrescine = S-methyl-5'-thioadenosine + spermidine + H(+). It participates in amine and polyamine biosynthesis; spermidine biosynthesis; spermidine from putrescine: step 1/1. Its function is as follows. Catalyzes the irreversible transfer of a propylamine group from the amino donor S-adenosylmethioninamine (decarboxy-AdoMet) to putrescine (1,4-diaminobutane) to yield spermidine. The polypeptide is Polyamine aminopropyltransferase (Neisseria meningitidis serogroup A / serotype 4A (strain DSM 15465 / Z2491)).